We begin with the raw amino-acid sequence, 202 residues long: Small ribosomal subunit protein uS4c (202 aa).

The 65-residue stretch at 90-154 folds into the S4 RNA-binding domain; the sequence is MRLDNIIFRL…SQSIITKNLN (65 aa).

This sequence belongs to the universal ribosomal protein uS4 family. As to quaternary structure, part of the 30S ribosomal subunit. Contacts protein S5. The interaction surface between S4 and S5 is involved in control of translational fidelity.

It localises to the plastid. Its subcellular location is the chloroplast. In terms of biological role, one of the primary rRNA binding proteins, it binds directly to 16S rRNA where it nucleates assembly of the body of the 30S subunit. Its function is as follows. With S5 and S12 plays an important role in translational accuracy. The chain is Small ribosomal subunit protein uS4c (rps4) from Ricciocarpos natans (Liverwort).